The following is a 1192-amino-acid chain: DNA topoisomerase 2 (1192 aa).

Residues Asn64, Asn95, and 142–149 (GTNGVGLK) contribute to the ATP site. Positions 438, 539, and 541 each coordinate Mg(2+). A Topo IIA-type catalytic domain is found at 707–1174 (IPNFLDGMTR…PGASVWLEEI (468 aa)). The active-site O-(5'-phospho-DNA)-tyrosine intermediate is Tyr800.

The protein belongs to the type II topoisomerase family. It depends on Mg(2+) as a cofactor. Requires Mn(2+) as cofactor. Ca(2+) is required as a cofactor.

It localises to the host cytoplasm. It catalyses the reaction ATP-dependent breakage, passage and rejoining of double-stranded DNA.. Type II topoisomerase. Processively relaxes supercoiled DNA. Displays DNA-supercoiling activity only when associated with the viral histone-like protein. The sequence is that of DNA topoisomerase 2 from African swine fever virus (isolate Tick/South Africa/Pretoriuskop Pr4/1996) (ASFV).